The sequence spans 514 residues: MKQLTIYPGKLTLDELRQVYLQPVKITLDSQIFPAIERSVECVNAILAENRTAYGINTGFGLLASTRIEEDNLEKLQRSLVVSHAAGVGKALDDNMTRLIMVLKINSLSRGYSGIRLAVIQALIALVNAEIYPHIPCKGSVGASGDLAPLAHMSLLLLGEGQARYQGEWLPAKEALAKANLQPITLAAKEGLALLNGTQVSTAFALRGLFEAEDLLAAAIVCGSLSVEAALGSRKPFDARVHVVRGQQGQIDVAALYRHVLEESSELSDSHINCPKVQDPYSLRCQPQVMGACLTQLRHAADVILTEANAVSDNPLVFAEQGEVISGGNFHAEPVAMASDNLALVLAEIGALSERRIALLMDSHMSQLPPFLVENGGVNSGFMIAQVTAAALASENKALAHPASVDSLPTSANQEDHVSMAPAAGRRLWEMAENTRGILAIEWLSACQGIDFRNGLKSSPILEEARVILRAKVDYYDQDRFFAPDIDAAVKLLAEQHLSSLLPSGQILQRKNNR.

The 5-imidazolinone (Ala-Gly) cross-link spans 143 to 145; sequence ASG. Serine 144 is subject to 2,3-didehydroalanine (Ser).

The protein belongs to the PAL/histidase family. Contains an active site 4-methylidene-imidazol-5-one (MIO), which is formed autocatalytically by cyclization and dehydration of residues Ala-Ser-Gly.

It is found in the cytoplasm. It carries out the reaction L-histidine = trans-urocanate + NH4(+). It functions in the pathway amino-acid degradation; L-histidine degradation into L-glutamate; N-formimidoyl-L-glutamate from L-histidine: step 1/3. The protein is Histidine ammonia-lyase of Photorhabdus laumondii subsp. laumondii (strain DSM 15139 / CIP 105565 / TT01) (Photorhabdus luminescens subsp. laumondii).